Consider the following 94-residue polypeptide: MNKEQFDVNLVPTWRQGYRFQFEPAQNGFVILYPEGMIKLNESAGAIGQYIDGTNNVSAIIAQLKQQFGDIPEIDNDVIDYMLVAQQQHWIDLV.

The protein belongs to the PqqD family. In terms of assembly, monomer. Interacts with PqqE.

The protein operates within cofactor biosynthesis; pyrroloquinoline quinone biosynthesis. Functionally, functions as a PqqA binding protein and presents PqqA to PqqE, in the pyrroloquinoline quinone (PQQ) biosynthetic pathway. This is PqqA binding protein from Acinetobacter baumannii (strain AB307-0294).